We begin with the raw amino-acid sequence, 1001 residues long: E3 ubiquitin-protein ligase etc-1 (1001 aa).

Residues 28 to 57 form the IQ domain; that stretch reads QEKAARKVQKFWRGHRVQHNQRLLFRAEFD. Positions 66 to 115 form a coiled coil; the sequence is LEETIKMAQLLVNFYETNKDEERLVMTLSELVKLKTSDKEFEKRIRETQR. Residues 658–1001 enclose the HECT domain; the sequence is KVNDLKSMVR…INSGAGFELA (344 aa). Cysteine 969 functions as the Glycyl thioester intermediate in the catalytic mechanism.

In terms of assembly, interacts with ify-1 and cyb-1.

It catalyses the reaction S-ubiquitinyl-[E2 ubiquitin-conjugating enzyme]-L-cysteine + [acceptor protein]-L-lysine = [E2 ubiquitin-conjugating enzyme]-L-cysteine + N(6)-ubiquitinyl-[acceptor protein]-L-lysine.. Its pathway is protein modification; protein ubiquitination. In terms of biological role, E3 ubiquitin-protein ligase that accepts ubiquitin from E2 ubiquitin-conjugating enzymes, such as ubc-18, in the form of a thioester and then directly transfers the ubiquitin to targeted substrates. Ubiquitinates ify-1 and cyb-1 targeting them for degradation in post-meiotic embryos. The polypeptide is E3 ubiquitin-protein ligase etc-1 (Caenorhabditis elegans).